The primary structure comprises 238 residues: Uridylate kinase (238 aa).

Position 12–15 (12–15 (KLSG)) interacts with ATP. G54 contributes to the UMP binding site. G55 and R59 together coordinate ATP. Residues D74 and 135–142 (TGNPYFTT) contribute to the UMP site. ATP is bound by residues T162, N163, Y168, and D171.

The protein belongs to the UMP kinase family. As to quaternary structure, homohexamer.

It localises to the cytoplasm. It carries out the reaction UMP + ATP = UDP + ADP. Its pathway is pyrimidine metabolism; CTP biosynthesis via de novo pathway; UDP from UMP (UMPK route): step 1/1. Inhibited by UTP. Functionally, catalyzes the reversible phosphorylation of UMP to UDP. In Bradyrhizobium sp. (strain ORS 278), this protein is Uridylate kinase.